Here is a 654-residue protein sequence, read N- to C-terminus: MLAAKNILNRSSLSSSFRIATRLQSTKVQGSVIGIDLGTTNSAVAIMEGKVPKIIENAEGSRTTPSVVAFTKEGERLVGIPAKRQAVVNPENTLFATKRLIGRRFEDAEVQRDIKQVPYKIVKHSNGDAWVEARGQTYSPAQIGGFVLNKMKETAEAYLGKPVKNAVVTVPAYFNDSQRQATKDAGQIVGLNVLRVVNEPTAAALAYGLEKSDSKVVAVFDLGGGTFDISILDIDNGVFEVKSTNGDTHLGGEDFDIYLLREIVSRFKTETGIDLENDRMAIQRIREAAEKAKIELSSTVSTEINLPFITADASGPKHINMKFSRAQFETLTAPLVKRTVDPVKKALKDAGLSTSDISEVLLVGGMSRMPKVVETVKSLFGKDPSKAVNPDEAVAIGAAVQGAVLSGEVTDVLLLDVTPLSLGIETLGGVFTRLIPRNTTIPTKKSQIFSTAAAGQTSVEIRVFQGERELVRDNKLIGNFTLAGIPPAPKGVPQIEVTFDIDADGIINVSARDKATNKDSSITVAGSSGLSENEIEQMVNDAEKFKSQDEARKQAIETANKADQLANDTENSLKEFEGKVDKAEAQKVRDQITSLKELVARVQGGEEVNAEELKTKTEELQTSSMKLFEQLYKNDSNNNNNNNGNNAESGETKQ.

The N-terminal 23 residues, 1–23 (MLAAKNILNRSSLSSSFRIATRL), are a transit peptide targeting the mitochondrion. Phosphothreonine is present on Thr330. The interval 629–654 (EQLYKNDSNNNNNNNGNNAESGETKQ) is disordered. A compositionally biased stretch (low complexity) spans 637 to 646 (NNNNNNNGNN).

Belongs to the heat shock protein 70 family. In terms of assembly, component of the PAM complex, at least composed of SSC1 (mtHsp70), MGE1, TIM44, PAM16/TIM16, PAM17 and PAM18/TIM14. In the complex, SSC1 interacts directly with PAM18 and TIM44. Interacts with NAP1.

The protein resides in the mitochondrion matrix. It catalyses the reaction ATP + H2O = ADP + phosphate + H(+). Its function is as follows. Essential component of the PAM complex, a complex required for the translocation of transit peptide-containing proteins from the inner membrane into the mitochondrial matrix in an ATP-dependent manner. Constitutes the ATP-driven core of the motor and binds the precursor preprotein. Required for the import of the processed frataxin homolog YFH1 into the mitochondrion. In Saccharomyces cerevisiae (strain ATCC 204508 / S288c) (Baker's yeast), this protein is Import motor subunit, mitochondrial.